The primary structure comprises 220 residues: Ribosomal RNA large subunit methyltransferase E (220 aa).

The S-adenosyl-L-methionine site is built by Gly60, Trp62, Asp92, Asp108, and Asp133. Lys173 serves as the catalytic Proton acceptor. Residues 195–220 are disordered; it reads APRKPKASRDKSSETFILGRHLKQPR.

It belongs to the class I-like SAM-binding methyltransferase superfamily. RNA methyltransferase RlmE family.

Its subcellular location is the cytoplasm. It carries out the reaction uridine(2552) in 23S rRNA + S-adenosyl-L-methionine = 2'-O-methyluridine(2552) in 23S rRNA + S-adenosyl-L-homocysteine + H(+). Functionally, specifically methylates the uridine in position 2552 of 23S rRNA at the 2'-O position of the ribose in the fully assembled 50S ribosomal subunit. The chain is Ribosomal RNA large subunit methyltransferase E from Burkholderia pseudomallei (strain 1710b).